Here is a 489-residue protein sequence, read N- to C-terminus: Sphingolipid C9-methyltransferase (489 aa).

The next 2 helical transmembrane spans lie at 29–49 (GAKN…PLFV) and 59–79 (TFIF…WTVL). Residues 202–203 (YT), 239–247 (LLDLGCGWG), 265–270 (TLGKNQ), and 295–296 (YR) contribute to the S-adenosyl-L-methionine site.

This sequence belongs to the CFA/CMAS family.

The protein resides in the membrane. The catalysed reaction is a (4E,8E)-4-sphinga-4,8-dienine ceramide + S-adenosyl-L-methionine = a 9-methyl-(4E,8E)-sphinga-4,8-dienine ceramide + S-adenosyl-L-homocysteine + H(+). The protein operates within lipid metabolism; sphingolipid metabolism. Catalyzes methylation of the sphingoid base component of glucosylceramides (GluCers) at the C9-position. Sphingolipid C9-methylation requires 4,8-desaturated ceramides as substrates. Glucosylceramides play important roles in growth, differentiation and pathogenicity. The methyl group at the C9-position distinguishes fungal glucosylceramides from those of plants and animals, and may thus play a role in host-pathogen interactions enabling the host to recognize the fungal attack and initiate specific defense responses. The chain is Sphingolipid C9-methyltransferase from Komagataella phaffii (strain GS115 / ATCC 20864) (Yeast).